The following is a 142-amino-acid chain: Large ribosomal subunit protein uL13 (142 aa).

Belongs to the universal ribosomal protein uL13 family. In terms of assembly, part of the 50S ribosomal subunit.

Its function is as follows. This protein is one of the early assembly proteins of the 50S ribosomal subunit, although it is not seen to bind rRNA by itself. It is important during the early stages of 50S assembly. This chain is Large ribosomal subunit protein uL13, found in Lachnospira eligens (strain ATCC 27750 / DSM 3376 / VPI C15-48 / C15-B4) (Eubacterium eligens).